Here is a 366-residue protein sequence, read N- to C-terminus: Protein U1 (366 aa).

The protein belongs to the herpesviridae US22 family.

The chain is Protein U1 (U1) from Human herpesvirus 6A (strain Uganda-1102) (HHV-6 variant A).